A 437-amino-acid polypeptide reads, in one-letter code: UDP-N-acetylmuramate--L-alanine ligase (437 aa).

108-114 (GAHGKTS) is a binding site for ATP.

It belongs to the MurCDEF family.

It localises to the cytoplasm. The catalysed reaction is UDP-N-acetyl-alpha-D-muramate + L-alanine + ATP = UDP-N-acetyl-alpha-D-muramoyl-L-alanine + ADP + phosphate + H(+). It participates in cell wall biogenesis; peptidoglycan biosynthesis. Its function is as follows. Cell wall formation. This Staphylococcus aureus (strain COL) protein is UDP-N-acetylmuramate--L-alanine ligase.